The sequence spans 371 residues: tRNA-specific 2-thiouridylase MnmA (371 aa).

ATP-binding positions include 16-23 and M42; that span reads GMSGGVDS. Residues 102–104 form an interaction with target base in tRNA region; that stretch reads NPD. Residue C107 is the Nucleophile of the active site. The cysteines at positions 107 and 204 are disulfide-linked. G132 serves as a coordination point for ATP. Residues 154–156 form an interaction with tRNA region; that stretch reads KDQ. The active-site Cysteine persulfide intermediate is C204. Residues 316–317 form an interaction with tRNA region; it reads RY.

The protein belongs to the MnmA/TRMU family.

It localises to the cytoplasm. The enzyme catalyses S-sulfanyl-L-cysteinyl-[protein] + uridine(34) in tRNA + AH2 + ATP = 2-thiouridine(34) in tRNA + L-cysteinyl-[protein] + A + AMP + diphosphate + H(+). Catalyzes the 2-thiolation of uridine at the wobble position (U34) of tRNA, leading to the formation of s(2)U34. This is tRNA-specific 2-thiouridylase MnmA from Shewanella halifaxensis (strain HAW-EB4).